Here is a 396-residue protein sequence, read N- to C-terminus: Putative nickel insertion protein (396 aa).

This sequence belongs to the LarC family.

The sequence is that of Putative nickel insertion protein from Methanosarcina mazei (strain ATCC BAA-159 / DSM 3647 / Goe1 / Go1 / JCM 11833 / OCM 88) (Methanosarcina frisia).